A 65-amino-acid polypeptide reads, in one-letter code: Conotoxin Cal1.3 (65 aa).

An N-terminal signal peptide occupies residues 1–18 (MRCLPVFIILLLLASTAA). The propeptide occupies 19-49 (VDVAGSKLKRRLERKPYQGSQAYVKKTAFGL). 2 cysteine pairs are disulfide-bonded: Cys52–Cys62 and Cys53–Cys59. Pro61 is subject to 4-hydroxyproline. At Cys62 the chain carries Cysteine amide.

It belongs to the conotoxin T superfamily. In terms of tissue distribution, expressed by the venom duct.

It localises to the secreted. Functionally, probable neurotoxin with unknown target. Possibly targets ion channels. This is Conotoxin Cal1.3 from Californiconus californicus (California cone).